The following is a 232-amino-acid chain: Large ribosomal subunit protein uL1 (232 aa).

It belongs to the universal ribosomal protein uL1 family. Part of the 50S ribosomal subunit.

Binds directly to 23S rRNA. The L1 stalk is quite mobile in the ribosome, and is involved in E site tRNA release. Functionally, protein L1 is also a translational repressor protein, it controls the translation of the L11 operon by binding to its mRNA. The protein is Large ribosomal subunit protein uL1 of Burkholderia multivorans (strain ATCC 17616 / 249).